Reading from the N-terminus, the 1320-residue chain is Poly [ADP-ribose] polymerase tankyrase-1 (1320 aa).

A compositionally biased stretch (basic residues) spans 1 to 15; it reads MAASRRSQHHHHHHQ. 2 disordered regions span residues 1–88 and 111–152; these read MAAS…DGAV and AGGG…AAGV. The segment covering 25 to 46 has biased composition (pro residues); that stretch reads SAPPPPPPPPLSPGLAPGPTPA. A compositionally biased stretch (basic and acidic residues) spans 69–82; it reads DGSRDPPDRPRSPD. Over residues 120–152 the composition is skewed to low complexity; the sequence is NSASSASSPTSSSSSSPSSPGSSLAESPEAAGV. ANK repeat units lie at residues 174 to 202, 208 to 237, 241 to 270, 274 to 303, 361 to 390, 394 to 423, 427 to 456, 514 to 546, 550 to 579, 583 to 612, 676 to 705, 709 to 738, 742 to 771, 775 to 803, 829 to 858, 862 to 891, 895 to 924, and 928 to 957; these read GALR…NVNA, RKSS…NVHA, GGLI…DPNA, WNYT…DPNI, RKST…DVHA, GGLV…CVNA, WQFT…DPTL, SHET…NVNE, DFMT…KMNA, LGQT…DPSI, RHST…DVHA, GGLV…SVNV, WKFT…DPTK, DGNT…LLDA, RNST…DVNA, GGLI…CVNA, WAFT…DPTM, and EGQT…LPTC. In terms of domain architecture, SAM spans 1019–1082; that stretch reads GLDMNISQFL…IKGVERLLGG (64 aa). A PARP catalytic domain is found at 1105–1310; sequence APEDKEYQSV…YQIMKPEAPS (206 aa). Residues cysteine 1227, histidine 1230, cysteine 1235, and cysteine 1238 each contribute to the Zn(2+) site.

The protein belongs to the ARTD/PARP family. Oligomerizes and associates with TNKS2. Interacts with the cytoplasmic domain of LNPEP/Otase in SLC2A4/GLUT4-vesicles. Binds to the N-terminus of telomeric TERF1 via the ANK repeats. Found in a complex with POT1; TERF1 and TINF2. Interacts with AXIN1. Interacts with AXIN2. Interacts with BLZF1 and CASC3. Interacts with NUMA1. In terms of processing, phosphorylated on serine residues by MAPK kinases upon insulin stimulation. Phosphorylated during mitosis. Ubiquitinated by RNF146 when auto-poly-ADP-ribosylated, leading to its degradation. Post-translationally, ADP-ribosylated (-auto). Poly-ADP-ribosylated protein is recognized by RNF146, followed by ubiquitination.

Its subcellular location is the cytoplasm. It is found in the golgi apparatus membrane. The protein resides in the cytoskeleton. It localises to the microtubule organizing center. The protein localises to the centrosome. Its subcellular location is the nucleus. It is found in the nuclear pore complex. The protein resides in the chromosome. It localises to the telomere. The protein localises to the spindle pole. It carries out the reaction NAD(+) + (ADP-D-ribosyl)n-acceptor = nicotinamide + (ADP-D-ribosyl)n+1-acceptor + H(+).. The enzyme catalyses L-aspartyl-[protein] + NAD(+) = 4-O-(ADP-D-ribosyl)-L-aspartyl-[protein] + nicotinamide. The catalysed reaction is L-glutamyl-[protein] + NAD(+) = 5-O-(ADP-D-ribosyl)-L-glutamyl-[protein] + nicotinamide. Functionally, poly-ADP-ribosyltransferase involved in various processes such as Wnt signaling pathway, telomere length and vesicle trafficking. Acts as an activator of the Wnt signaling pathway by mediating poly-ADP-ribosylation (PARsylation) of AXIN1 and AXIN2, 2 key components of the beta-catenin destruction complex: poly-ADP-ribosylated target proteins are recognized by RNF146, which mediates their ubiquitination and subsequent degradation. Also mediates PARsylation of BLZF1 and CASC3, followed by recruitment of RNF146 and subsequent ubiquitination. Mediates PARsylation of TERF1, thereby contributing to the regulation of telomere length. Involved in centrosome maturation during prometaphase by mediating PARsylation of HEPACAM2/MIKI. May also regulate vesicle trafficking and modulate the subcellular distribution of SLC2A4/GLUT4-vesicles. May be involved in spindle pole assembly through PARsylation of NUMA1. Stimulates 26S proteasome activity. The chain is Poly [ADP-ribose] polymerase tankyrase-1 (Tnks) from Mus musculus (Mouse).